Reading from the N-terminus, the 268-residue chain is uncharacterized protein (268 aa).

This is an uncharacterized protein from Schizosaccharomyces pombe (strain 972 / ATCC 24843) (Fission yeast).